The chain runs to 274 residues: PTS system sorbose-specific EIID component (274 aa).

Positions 4–273 constitute a PTS EIID domain; the sequence is KKITQGDLVS…GIIGNALGFL (270 aa). 6 helical membrane passes run 61–81, 99–119, 126–146, 186–206, 226–246, and 253–273; these read LVFFNTTPAVCGPVIAVTAAM, IKVGLMGPLAGVGDPLVWGTL, LGASLALSGNILGPLLFFFIF, ILGLFVMGVLVTKWTTINVPL, ILDQLCPGLLALGLTLLMVRL, and PVWLIFALFGLGIIGNALGFL.

Its subcellular location is the cell inner membrane. In terms of biological role, the phosphoenolpyruvate-dependent sugar phosphotransferase system (PTS), a major carbohydrate active transport system, catalyzes the phosphorylation of incoming sugar substrates concomitant with their translocation across the cell membrane. The enzyme II SorABFM PTS system is involved in sorbose transport. This is PTS system sorbose-specific EIID component from Klebsiella pneumoniae.